Consider the following 361-residue polypeptide: Phospho-N-acetylmuramoyl-pentapeptide-transferase (361 aa).

The next 10 membrane-spanning stretches (helical) occupy residues 27-47, 72-92, 94-114, 133-153, 169-189, 200-220, 237-257, 264-284, 289-309, and 338-358; these read GAIVTAVLFVFLFGPGIISTL, TPTMGGLMIFSGLIVATLLWA, LSNLYVWVVLFVTTGFGLIGF, ARLAIEALIAGIAVVLMINAG, LLLDLGWFFVVFGAFVIVAAG, GLAIVPVMIAAASFGMISYLS, VGELAVICGAIIGAGLGFLWF, IFMGDTGSLALGGLLGSIAVA, IVLAVIGGLFVLEAVSVIVQV, and QVVIRFWIIAVVLALLGLATL.

Belongs to the glycosyltransferase 4 family. MraY subfamily. Mg(2+) is required as a cofactor.

It localises to the cell inner membrane. It catalyses the reaction UDP-N-acetyl-alpha-D-muramoyl-L-alanyl-gamma-D-glutamyl-meso-2,6-diaminopimeloyl-D-alanyl-D-alanine + di-trans,octa-cis-undecaprenyl phosphate = di-trans,octa-cis-undecaprenyl diphospho-N-acetyl-alpha-D-muramoyl-L-alanyl-D-glutamyl-meso-2,6-diaminopimeloyl-D-alanyl-D-alanine + UMP. The protein operates within cell wall biogenesis; peptidoglycan biosynthesis. Its function is as follows. Catalyzes the initial step of the lipid cycle reactions in the biosynthesis of the cell wall peptidoglycan: transfers peptidoglycan precursor phospho-MurNAc-pentapeptide from UDP-MurNAc-pentapeptide onto the lipid carrier undecaprenyl phosphate, yielding undecaprenyl-pyrophosphoryl-MurNAc-pentapeptide, known as lipid I. The polypeptide is Phospho-N-acetylmuramoyl-pentapeptide-transferase (Azorhizobium caulinodans (strain ATCC 43989 / DSM 5975 / JCM 20966 / LMG 6465 / NBRC 14845 / NCIMB 13405 / ORS 571)).